A 27-amino-acid polypeptide reads, in one-letter code: Delta-conotoxin TsVIA (27 aa).

3 disulfides stabilise this stretch: cysteine 1–cysteine 17, cysteine 8–cysteine 21, and cysteine 16–cysteine 25.

It belongs to the conotoxin O1 superfamily. Expressed by the venom duct.

It is found in the secreted. Its function is as follows. Delta-conotoxins bind to site 6 of voltage-gated sodium channels (Nav) and inhibit the inactivation process. This toxin inhibits tetrodotoxin(TTX)-sensitive sodium channels. A test on mouse Nav1.6/SCN8A confirms this sensitivity. This Conus tessulatus (Tessellate cone) protein is Delta-conotoxin TsVIA.